Consider the following 228-residue polypeptide: Translation initiation factor 6 (228 aa).

This sequence belongs to the eIF-6 family.

Functionally, binds to the 50S ribosomal subunit and prevents its association with the 30S ribosomal subunit to form the 70S initiation complex. The chain is Translation initiation factor 6 from Thermococcus gammatolerans (strain DSM 15229 / JCM 11827 / EJ3).